The chain runs to 238 residues: Heme oxygenase (238 aa).

Residue H17 coordinates heme b.

It belongs to the heme oxygenase family.

It is found in the plastid. It localises to the chloroplast. It catalyses the reaction heme b + 3 reduced [NADPH--hemoprotein reductase] + 3 O2 = biliverdin IXalpha + CO + Fe(2+) + 3 oxidized [NADPH--hemoprotein reductase] + 3 H2O + H(+). Its function is as follows. Catalyzes the opening of the heme ring with the release of iron. Key enzyme in the synthesis of the chromophoric part of the photosynthetic antennae. In Pyropia yezoensis (Susabi-nori), this protein is Heme oxygenase (pbsA).